The chain runs to 205 residues: MTMQFLIASNVLLWLALIGCAVLMLGLLRQVGLLHERSSPMGAMITDHGPDVGDAAPTFDLPDHSGAMVRIGGPSALKRPTLLMFTAPTCPVCDKLFPLIKSIARAEKFSVVMISDGQPDEHQRFLAKHELGDIRYVVSAEVGMAFQVGKIPYGVLLDPEGVIRAKGLTNTREHLESLLEADKSGFASIQQFMTSRKHSHDAKAA.

The helical transmembrane segment at 5–25 (FLIASNVLLWLALIGCAVLML) threads the bilayer. Residues 50-184 (PDVGDAAPTF…LESLLEADKS (135 aa)) enclose the Thioredoxin domain.

Its subcellular location is the membrane. It participates in one-carbon metabolism; methylamine degradation. May be specifically involved in the processing, transport, and/or maturation of the MADH beta-subunit. This is Methylamine utilization protein MauD (mauD) from Methylorubrum extorquens (strain ATCC 14718 / DSM 1338 / JCM 2805 / NCIMB 9133 / AM1) (Methylobacterium extorquens).